A 33-amino-acid polypeptide reads, in one-letter code: MGKQIFNTAVICFTLTLIGLSLGFVLLKIQGDE.

A helical transmembrane segment spans residues 9 to 29 (AVICFTLTLIGLSLGFVLLKI).

The protein belongs to the PetM family. The 4 large subunits of the cytochrome b6-f complex are cytochrome b6, subunit IV (17 kDa polypeptide, PetD), cytochrome f and the Rieske protein, while the 4 small subunits are PetG, PetL, PetM and PetN. The complex functions as a dimer.

It is found in the plastid. Its subcellular location is the cyanelle thylakoid membrane. Its function is as follows. Component of the cytochrome b6-f complex, which mediates electron transfer between photosystem II (PSII) and photosystem I (PSI), cyclic electron flow around PSI, and state transitions. The protein is Cytochrome b6-f complex subunit 7 of Cyanophora paradoxa.